The chain runs to 156 residues: Terrestric acid biosynthesis cluster protein E (156 aa).

It functions in the pathway secondary metabolite biosynthesis. Functionally, part of the tra gene cluster that produces terrestric acid. The clavatol biosynthesis cluster cla and the terrestric acid cluster tra are both involved in the production of peniphenones and penilactones. The non-reducing PKS claF is responsible for the formation of clavatol from successive condensations of 3 malonyl-CoA units, presumably with a simple acetyl-CoA starter unit, and 2 methylation steps. The esterase claE probably collaborates with claF by catalyzing the hydrolysis of ACP-bound acyl intermediates to free the ACP from stalled intermediates. The clavatol oxidase claD then converts clavatol to hydroxyclavatol. Spontaneous dehydration of hydroxyclavatol leads to the accumulation of the highly active ortho-quinone methide. On the other hand, the PKS-NRPS hybrid traA is involved in the formation of crustosic acid, with the help of traB and traD. The polyketide synthase module (PKS) of traA is responsible for the synthesis of the polyketide backbone via the condensation of an acetyl-CoA starter unit with 3 malonyl-CoA units. The downstream nonribosomal peptide synthetase (NRPS) module then amidates the carboxyl end of the polyketide with L-malic acid. Because traA lacks a designated enoylreductase (ER) domain, the required activity is provided the enoyl reductase traG. Crustosic acid undergoes decarboxylation and isomerization to the terrestric acid, catalyzed by the 2-oxoglutarate-dependent dioxygenase traH. Both acids are further converted to the 2 gamma-butyrolactones (R)-5-methyltetronic acid and (S)-5-carboxylmethyltetronic acid, with involvement of the cytochrome P450 monooxygenase claJ. Spontaneous addition of the methide to these gamma-butyrolactones leads to peniphenone D and penilactone D, which undergo again stereospecific attacking by methide to give penilactones A and B. TraE seems not to be involved in the biosynthesis of peniphenones and penilactones in the conditions used to study its function. The protein is Terrestric acid biosynthesis cluster protein E of Penicillium crustosum (Blue mold fungus).